A 400-amino-acid polypeptide reads, in one-letter code: Arabinan endo-1,5-alpha-L-arabinosidase B (400 aa).

An N-terminal signal peptide occupies residues 1–16 (MAVIFVLFFLVSMALS). Asparagine 24 carries an N-linked (GlcNAc...) asparagine glycan. Aspartate 70 acts as the Proton acceptor in catalysis. N-linked (GlcNAc...) asparagine glycosylation is present at asparagine 184. Residue glutamate 277 is the Proton donor of the active site. N-linked (GlcNAc...) asparagine glycosylation occurs at asparagine 372.

Belongs to the glycosyl hydrolase 43 family.

It localises to the secreted. It catalyses the reaction Endohydrolysis of (1-&gt;5)-alpha-arabinofuranosidic linkages in (1-&gt;5)-arabinans.. Its pathway is glycan metabolism; L-arabinan degradation. Endo-1,5-alpha-L-arabinanase involved in degradation of pectin. Its preferred substrate is linear 1,5-alpha-L-arabinan. The chain is Arabinan endo-1,5-alpha-L-arabinosidase B (abnB) from Emericella nidulans (strain FGSC A4 / ATCC 38163 / CBS 112.46 / NRRL 194 / M139) (Aspergillus nidulans).